The following is a 139-amino-acid chain: Chemical-damaging agent resistance protein B (139 aa).

The protein belongs to the CAPAB/TerDEXZ family.

Not known; could confer methyl methane sulfonate (MMS), mitomycin C (MC), and UV resistance. The chain is Chemical-damaging agent resistance protein B from Clostridium acetobutylicum.